A 505-amino-acid chain; its full sequence is Serine/threonine protein kinase OSK1 (505 aa).

In terms of domain architecture, Protein kinase spans 14 to 266; it reads YRIGKTLGIG…IREIREHQWF (253 aa). ATP-binding positions include 20–28 and Lys43; that span reads LGIGSFGKV. The Proton acceptor role is filled by Asp137. Residues 287–327 form the UBA domain; sequence KLDDETLNDVINMGFDKNQLIESLHKRLQNEATVAYYLLLD. A compositionally biased stretch (polar residues) spans 347-361; it reads SSLAQVTPAETPNSA. Residues 347-372 are disordered; the sequence is SSLAQVTPAETPNSATDHRQHGHMES. A KA1 domain is found at 456 to 504; that stretch reads SEKSTHTVKFEIQLYKTRDEKYLLDLQRVSGPQLLFLDLCSAFLTQLRV.

The protein belongs to the protein kinase superfamily. Ser/Thr protein kinase family. Expressed in young roots, young shoots, flowers, and immature seeds. Mostly expressed in leaf sheaths and roots, and to a lower extent, in germinating seeds, leaf blades and panicles.

It is found in the nucleus. The enzyme catalyses L-seryl-[protein] + ATP = O-phospho-L-seryl-[protein] + ADP + H(+). The catalysed reaction is L-threonyl-[protein] + ATP = O-phospho-L-threonyl-[protein] + ADP + H(+). In terms of biological role, serine/threonine-protein kinase involved in sugar signaling during germination and seedling growth. Negative regulators of sugar response complex (SRC) in alpha-amylase gene promoters, thus relieving SRC sugar repression in a MYBS1-dependent manner. Required for MYBS1 and AAMY3 accumulation under glucose starvation. In Oryza sativa subsp. japonica (Rice), this protein is Serine/threonine protein kinase OSK1.